An 84-amino-acid polypeptide reads, in one-letter code: M-zodatoxin-Lt2b (84 aa).

An N-terminal signal peptide occupies residues 1 to 22 (MKYFVIALALAVALVCIAESTA). The propeptide occupies 23–58 (YEVNEELENELDDLDDAAWLAVAEELQGLEDFEESR). A Processing quadruplet motif motif is present at residues 55–58 (EESR).

Cleavage of the propeptide depends on the processing quadruplet motif (XXXR, with at least one of X being E). In terms of tissue distribution, expressed by the venom gland.

It localises to the secreted. Its function is as follows. Has antimicrobial activity against both Gram-positive and Gram-negative bacteria, and yeasts. Also has a strong hemolytic activity against rabbit erythrocytes. Causes paralysis, but is not lethal when injected into insect (M.domestica) larvae. In Lachesana tarabaevi (Spider), this protein is M-zodatoxin-Lt2b.